Reading from the N-terminus, the 197-residue chain is uncharacterized protein (197 aa).

The next 4 membrane-spanning stretches (helical) occupy residues 30-50, 61-81, 101-121, and 130-150; these read WVAM…VEMA, LVAG…PPLV, LWSV…LGLA, and IGEF…VAML.

It is found in the cell membrane. This is an uncharacterized protein from Mycobacterium tuberculosis (strain CDC 1551 / Oshkosh).